We begin with the raw amino-acid sequence, 92 residues long: Acylphosphatase (92 aa).

A disulfide bond links Cys-5 and Cys-49. In terms of domain architecture, Acylphosphatase-like spans 5 to 92 (CIIAWVYGRV…SGELTDFRIR (88 aa)). Residues Arg-20 and Asn-38 contribute to the active site.

This sequence belongs to the acylphosphatase family.

The catalysed reaction is an acyl phosphate + H2O = a carboxylate + phosphate + H(+). This Escherichia coli O6:H1 (strain CFT073 / ATCC 700928 / UPEC) protein is Acylphosphatase.